The chain runs to 427 residues: Glucose-1-phosphate adenylyltransferase (427 aa).

Alpha-D-glucose 1-phosphate-binding positions include Tyr-112, Gly-177, 192–193 (EK), and Ser-210.

Belongs to the bacterial/plant glucose-1-phosphate adenylyltransferase family. In terms of assembly, homotetramer.

The enzyme catalyses alpha-D-glucose 1-phosphate + ATP + H(+) = ADP-alpha-D-glucose + diphosphate. It functions in the pathway glycan biosynthesis; glycogen biosynthesis. In terms of biological role, involved in the biosynthesis of ADP-glucose, a building block required for the elongation reactions to produce glycogen. Catalyzes the reaction between ATP and alpha-D-glucose 1-phosphate (G1P) to produce pyrophosphate and ADP-Glc. The sequence is that of Glucose-1-phosphate adenylyltransferase from Methylobacillus flagellatus (strain ATCC 51484 / DSM 6875 / VKM B-1610 / KT).